An 866-amino-acid chain; its full sequence is Ribosome biogenesis protein BOP1 homolog (866 aa).

Disordered regions lie at residues 1 to 180 (MVAN…EETR) and 214 to 241 (PPEAKSRFKGGKNQDEYAAGDTSDEEDI). Acidic residues-rich tracts occupy residues 37–52 (VDDESASDYYESDEEN), 60–146 (GNDE…LEEP), and 167–179 (TAEDEDEEDDEET). 6 WD repeats span residues 527-566 (GHTDMIRSVSIEPKGEYLVTGSDDQTVKIWEVSTARCIRT), 568-608 (PTGD…SLLV), 697-735 (KSKGLIQCVLFHPVKPCLFVATQRHVRVYDLVKQELLKK), 738-777 (PSCKWISSMAIHPKGDNLLVATYEKKMMWFDLDLSTRPYQ), 781-820 (LHHSAIRNVAFHLRYPLFASASDDRSVIVSHGMVYNDLLQ), and 836-866 (VNDFGAFDVVFHPTQPWLFSSGADNTVRLYT).

This sequence belongs to the WD repeat BOP1/ERB1 family.

The protein resides in the nucleus. It is found in the nucleolus. It localises to the nucleoplasm. Functionally, required for maturation of ribosomal RNAs and formation of the large ribosomal subunit. The polypeptide is Ribosome biogenesis protein BOP1 homolog (Aedes aegypti (Yellowfever mosquito)).